A 580-amino-acid polypeptide reads, in one-letter code: Laccase-6 (580 aa).

The signal sequence occupies residues 1–22 (MSCSWMIPVFAILAFVASAAQA). 2 consecutive Plastocyanin-like domains span residues 30-148 (NVAT…PRRA) and 158-317 (EEKT…YVDA). Asparagine 44 and asparagine 78 each carry an N-linked (GlcNAc...) asparagine glycan. 4 residues coordinate Cu cation: histidine 82, histidine 84, histidine 127, and histidine 129. Residues asparagine 306, asparagine 335, asparagine 385, asparagine 397, and asparagine 462 are each glycosylated (N-linked (GlcNAc...) asparagine). The 141-residue stretch at 424-564 (DFPDQPPVAF…AMVFEVESGP (141 aa)) folds into the Plastocyanin-like 3 domain. Cu cation-binding residues include histidine 480, histidine 483, histidine 485, histidine 543, cysteine 544, histidine 545, and histidine 549.

Belongs to the multicopper oxidase family. It depends on Cu cation as a cofactor.

It localises to the secreted. The protein resides in the extracellular space. Its subcellular location is the apoplast. The enzyme catalyses 4 hydroquinone + O2 = 4 benzosemiquinone + 2 H2O. Lignin degradation and detoxification of lignin-derived products. The chain is Laccase-6 (LAC6) from Oryza sativa subsp. japonica (Rice).